Here is an 89-residue protein sequence, read N- to C-terminus: Ixosin-B (89 aa).

Residues 1–26 (MASGWTHRLLLLAAVVTLGATPIAAA) form the signal peptide. The propeptide occupies 27 to 57 (SMEYLVTAPGYLTPNADIKITAVVTNPSSAG). A disordered region spans residues 68–89 (SGIQPEQHSSGKSDVRRWRSRY). Residues 76 to 89 (SSGKSDVRRWRSRY) are compositionally biased toward basic and acidic residues.

Functionally, has antifungal activity against C.albicans. Has antibacterial activity against the Gram-positive bacterium S.aureus and the Gram-negative bacterium E.coli. Lacks hemolytic activity against rabbit erythrocytes. This chain is Ixosin-B, found in Ixodes sinensis (Hard tick).